The primary structure comprises 60 residues: Light-harvesting protein B-800/850 alpha chain (60 aa).

Residues 1-14 (MNNAKIWTVVKPST) lie on the Cytoplasmic side of the membrane. The chain crosses the membrane as a helical span at residues 15–35 (GIPLILGAVAVAALIVHAGLL). H31 serves as a coordination point for a bacteriochlorophyll. Topologically, residues 36–60 (TNTTWFANYWNGNPMATVVAVAPAQ) are periplasmic.

Belongs to the antenna complex alpha subunit family. The core complex is formed by different alpha and beta chains, binding bacteriochlorophyll molecules, and arranged most probably in tetrameric structures disposed around the reaction center. The non-pigmented gamma chains may constitute additional components.

Its subcellular location is the cell inner membrane. In terms of biological role, antenna complexes are light-harvesting systems, which transfer the excitation energy to the reaction centers. The sequence is that of Light-harvesting protein B-800/850 alpha chain (pucA) from Rhodobacter capsulatus (Rhodopseudomonas capsulata).